Consider the following 346-residue polypeptide: Probable electron transfer flavoprotein subunit alpha, mitochondrial (346 aa).

Residue 285 to 313 coordinates FAD; it reads LYVAIGISGAIQHLAGMKESKMIIAINKD.

The protein belongs to the ETF alpha-subunit/FixB family. Heterodimer of an alpha and a beta subunit. The cofactor is FAD.

The protein resides in the mitochondrion matrix. Its function is as follows. The electron transfer flavoprotein serves as a specific electron acceptor for several dehydrogenases, including five acyl-CoA dehydrogenases, glutaryl-CoA and sarcosine dehydrogenase. It transfers the electrons to the main mitochondrial respiratory chain via ETF-ubiquinone oxidoreductase (ETF dehydrogenase). The protein is Probable electron transfer flavoprotein subunit alpha, mitochondrial (ETF1) of Cryptococcus neoformans var. neoformans serotype D (strain B-3501A) (Filobasidiella neoformans).